Reading from the N-terminus, the 71-residue chain is Defensin-like protein 292 (71 aa).

3 disulfide bridges follow: cysteine 44-cysteine 64, cysteine 50-cysteine 69, and cysteine 56-cysteine 71.

This sequence belongs to the DEFL family.

The polypeptide is Defensin-like protein 292 (Arabidopsis thaliana (Mouse-ear cress)).